Consider the following 139-residue polypeptide: Natriuretic peptide Mc-NP (139 aa).

A signal peptide spans 1-25 (MVGLSRLRGGGLLLVLALLPLALDG). Residues 26–75 (KPLEEAPTAPSRIIPFSRPVRKQSQAVLDPMVHPERPAGSGDDGDSRRLE) constitute a propeptide that is removed on maturation. The disordered stretch occupies residues 45–72 (VRKQSQAVLDPMVHPERPAGSGDDGDSR). Cys-86 and Cys-102 form a disulfide bridge. The propeptide occupies 117-139 (IIPFSRPVRKESRAALDRMQQPG).

Belongs to the natriuretic peptide family. Expressed by the venom gland.

It is found in the secreted. Snake venom natriuretic peptide that dose-dependently induces the rapid relaxation of rat aortic strips phenylephrine-precontracted. Acts by stimulating cGMP production in a dose-dependent manner (by probably activating NPR1 and/or NPR2). May also show potent hypotensive effects. A synthetic peptide (AA 77-108, where the Cys-95 is replaced by a Ser) increases sodium excretion and urinary volume in rat kidneys. The chain is Natriuretic peptide Mc-NP from Micrurus corallinus (Brazilian coral snake).